Here is a 173-residue protein sequence, read N- to C-terminus: Putative MgpC-like protein MPN_092 (173 aa).

Belongs to the MgpC family.

In Mycoplasma pneumoniae (strain ATCC 29342 / M129 / Subtype 1) (Mycoplasmoides pneumoniae), this protein is Putative MgpC-like protein MPN_092.